Consider the following 201-residue polypeptide: Cell division protein SepF (201 aa).

Positions 27–38 (VQERTSVQRDSR) are enriched in basic and acidic residues. Residues 27-99 (VQERTSVQRD…PRVQNKDSVR (73 aa)) are disordered. Over residues 43 to 54 (QEASQRSHMTNS) the composition is skewed to polar residues. Positions 72–81 (NRQERQRVQR) are enriched in basic and acidic residues. Residues 83-92 (NAYQQATPRV) show a composition bias toward polar residues.

It belongs to the SepF family. In terms of assembly, homodimer. Interacts with FtsZ.

It is found in the cytoplasm. Functionally, cell division protein that is part of the divisome complex and is recruited early to the Z-ring. Probably stimulates Z-ring formation, perhaps through the cross-linking of FtsZ protofilaments. Its function overlaps with FtsA. In Streptococcus agalactiae serotype V (strain ATCC BAA-611 / 2603 V/R), this protein is Cell division protein SepF.